We begin with the raw amino-acid sequence, 61 residues long: uncharacterized protein (61 aa).

A helical transmembrane segment spans residues 10–27; the sequence is RILFFFFIFFTLFLFNIP.

The protein localises to the membrane. This is an uncharacterized protein from Dictyostelium discoideum (Social amoeba).